The sequence spans 514 residues: 2-isopropylmalate synthase (514 aa).

The Pyruvate carboxyltransferase domain maps to leucine 5–valine 268. Mn(2+) is bound by residues aspartate 14, histidine 202, histidine 204, and asparagine 239. The interval lysine 395–serine 514 is regulatory domain.

This sequence belongs to the alpha-IPM synthase/homocitrate synthase family. LeuA type 1 subfamily. Homodimer. Mn(2+) is required as a cofactor.

The protein resides in the cytoplasm. It carries out the reaction 3-methyl-2-oxobutanoate + acetyl-CoA + H2O = (2S)-2-isopropylmalate + CoA + H(+). The protein operates within amino-acid biosynthesis; L-leucine biosynthesis; L-leucine from 3-methyl-2-oxobutanoate: step 1/4. In terms of biological role, catalyzes the condensation of the acetyl group of acetyl-CoA with 3-methyl-2-oxobutanoate (2-ketoisovalerate) to form 3-carboxy-3-hydroxy-4-methylpentanoate (2-isopropylmalate). In Burkholderia lata (strain ATCC 17760 / DSM 23089 / LMG 22485 / NCIMB 9086 / R18194 / 383), this protein is 2-isopropylmalate synthase.